Reading from the N-terminus, the 248-residue chain is ATP synthase subunit a (248 aa).

6 helical membrane passes run 34 to 54, 91 to 111, 121 to 141, 147 to 167, 196 to 216, and 220 to 240; these read TNAT…LVFG, YFPY…LGLL, IAVT…LGFV, FLGL…LAVI, VFAA…AITA, and LEVL…CVYL.

This sequence belongs to the ATPase A chain family. As to quaternary structure, F-type ATPases have 2 components, CF(1) - the catalytic core - and CF(0) - the membrane proton channel. CF(1) has five subunits: alpha(3), beta(3), gamma(1), delta(1), epsilon(1). CF(0) has three main subunits: a(1), b(2) and c(9-12). The alpha and beta chains form an alternating ring which encloses part of the gamma chain. CF(1) is attached to CF(0) by a central stalk formed by the gamma and epsilon chains, while a peripheral stalk is formed by the delta and b chains.

It is found in the cell inner membrane. Functionally, key component of the proton channel; it plays a direct role in the translocation of protons across the membrane. The chain is ATP synthase subunit a from Paracoccus denitrificans (strain Pd 1222).